A 177-amino-acid chain; its full sequence is Ribosome maturation factor RimM (177 aa).

The PRC barrel domain maps to 96 to 177 (DNEFYWVDLI…KITVDWGLDY (82 aa)).

The protein belongs to the RimM family. Binds ribosomal protein uS19.

It localises to the cytoplasm. Its function is as follows. An accessory protein needed during the final step in the assembly of 30S ribosomal subunit, possibly for assembly of the head region. Essential for efficient processing of 16S rRNA. May be needed both before and after RbfA during the maturation of 16S rRNA. It has affinity for free ribosomal 30S subunits but not for 70S ribosomes. The protein is Ribosome maturation factor RimM of Herminiimonas arsenicoxydans.